The chain runs to 219 residues: Elongation factor Ts (219 aa).

The segment at Ser81 to Val84 is involved in Mg(2+) ion dislocation from EF-Tu.

It belongs to the EF-Ts family.

The protein resides in the cytoplasm. Functionally, associates with the EF-Tu.GDP complex and induces the exchange of GDP to GTP. It remains bound to the aminoacyl-tRNA.EF-Tu.GTP complex up to the GTP hydrolysis stage on the ribosome. This chain is Elongation factor Ts, found in Koribacter versatilis (strain Ellin345).